The primary structure comprises 161 residues: Putative 4-hydroxy-4-methyl-2-oxoglutarate aldolase (161 aa).

Residues 75–78 and Arg-97 contribute to the substrate site; that span reads GDNL. An a divalent metal cation-binding site is contributed by Asp-98.

It belongs to the class II aldolase/RraA-like family. In terms of assembly, homotrimer. Requires a divalent metal cation as cofactor.

The catalysed reaction is 4-hydroxy-4-methyl-2-oxoglutarate = 2 pyruvate. It carries out the reaction oxaloacetate + H(+) = pyruvate + CO2. Its function is as follows. Catalyzes the aldol cleavage of 4-hydroxy-4-methyl-2-oxoglutarate (HMG) into 2 molecules of pyruvate. Also contains a secondary oxaloacetate (OAA) decarboxylase activity due to the common pyruvate enolate transition state formed following C-C bond cleavage in the retro-aldol and decarboxylation reactions. The polypeptide is Putative 4-hydroxy-4-methyl-2-oxoglutarate aldolase (Alkalilimnicola ehrlichii (strain ATCC BAA-1101 / DSM 17681 / MLHE-1)).